A 779-amino-acid polypeptide reads, in one-letter code: FAD-dependent monooxygenase BOA8 (779 aa).

Residues E85, R128, D331, and A344 each coordinate FAD. Helical transmembrane passes span 471–491 (AQLA…KTPE), 504–524 (VKLD…IWTI), 542–562 (AFLL…YFFF), 587–607 (ILPL…WSSI), 618–638 (NAWY…KFIV), 665–685 (ILIC…SIAF), and 742–762 (LILT…GLIV).

It belongs to the paxM FAD-dependent monooxygenase family. FAD is required as a cofactor.

It is found in the membrane. Its pathway is polyketide biosynthesis. Its function is as follows. FAD-dependent monooxygenase; part of the gene cluster B that mediates the biosynthesis of botcinic acid and its botcinin derivatives, acetate-derived polyketides that contribute to virulence when combined with the sesquiterpene botrydial. Botcinic acid and its derivatives have been shown to induce chlorosis and necrosis during host plant infection, but also have antifungal activities. Two polyketide synthases, BOA6 and BOA9, are involved in the biosynthesis of botcinins. BOA6 mediates the formation of the per-methylated tetraketide core by condensation of four units of malonyl-CoA with one unit of acetyl-CoA, which would be methylated in activated methylene groups to yield a bicyclic acid intermediate that could then either be converted to botrylactone derivatives or lose the starter acetate unit through a retro-Claisen type C-C bond cleavage to yield botcinin derivatives. The second polyketide synthase, BOA9, is probably required for the biosynthesis of the tetraketide side chain of botcinins. The methyltransferase (MT) domain within BOA6 is probably responsible for the incorporation of four methyl groups. The trans-enoyl reductase BOA5 might take over the enoyl reductase function of BOA6 that misses an ER domain. The monooxygenases BOA2, BOA3 and BOA4 might be involved in further hydroxylations at C4, C5 and C8, whereas BOA7, close to BOA9, could potentially be involved in the hydroxylation at C4 in the side chain of botcinins. The sequence is that of FAD-dependent monooxygenase BOA8 from Botryotinia fuckeliana (strain B05.10) (Noble rot fungus).